A 563-amino-acid chain; its full sequence is Grainyhead-like protein 1 homolog (563 aa).

Residues 194-428 (NNLGFQYVLE…ELDKPAALFI (235 aa)) form the Grh/CP2 DB domain. 2 interaction with DNA regions span residues 326–335 (TDFSTQKGVK) and 372–375 (RKLR). A disordered region spans residues 377-405 (EDKRAQKRKVQEYTAGALPGGRKKSDGEY).

It belongs to the grh/CP2 family. Grainyhead subfamily.

It is found in the nucleus. Functionally, probable transcription factor. Binds a motif with the core sequence 5'-C[ACT][TG]G-3' in regulatory elements of target genes. Many putative target genes show oscillating expression levels, perhaps as a result of rhythmic variation in accumulation of grh-1. Plays a role in proper cuticle formation and/or barrier function and is required repetitively during development, for successful completion of each molt. Involved in modulating lifespan. Plays a role in defense response to bacteria. May act upstream of the p38 MAP kinase / pmk-1 pathway. May act downstream of the insulin/IGF-1 receptor signaling (IIS) pathway. The sequence is that of Grainyhead-like protein 1 homolog from Caenorhabditis elegans.